Here is a 281-residue protein sequence, read N- to C-terminus: tRNA N(3)-cytidine methyltransferase METTL8, mitochondrial (281 aa).

The transit peptide at 1-22 directs the protein to the mitochondrion; it reads MNVIWRSCICRLRQGKVPHRCQ. Lys-80 participates in a covalent cross-link: Glycyl lysine isopeptide (Lys-Gly) (interchain with G-Cter in SUMO). S-adenosyl-L-methionine contacts are provided by Trp-89 and Tyr-93. A compositionally biased stretch (polar residues) spans 139-151; that stretch reads RTQGTETHCQESF. A disordered region spans residues 139–180; sequence RTQGTETHCQESFVSPEPGSRGRSAPDPDLEEYSKGPGKTEP. The S-adenosyl-L-methionine site is built by Gly-194, Asp-220, and Asp-246.

The protein belongs to the methyltransferase superfamily. METL family. As to quaternary structure, interacts with EP300. Absent in embryonic lung but is induced in a fibroblast cell line by stretch. In terms of tissue distribution, expressed in undifferentiated progenitor cells, while its expression is inhibited by stretch. As to expression, absent in undifferentiated embryonic lung mesenchymal cells, but expression is induced by stretch. Expressed in mature adipose tissue.

The protein localises to the mitochondrion. It is found in the cytoplasm. It localises to the nucleus. The catalysed reaction is cytidine(32) in tRNA(Ser) + S-adenosyl-L-methionine = N(3)-methylcytidine(32) in tRNA(Ser) + S-adenosyl-L-homocysteine + H(+). The enzyme catalyses cytidine(32) in tRNA(Thr) + S-adenosyl-L-methionine = N(3)-methylcytidine(32) in tRNA(Thr) + S-adenosyl-L-homocysteine + H(+). It catalyses the reaction a cytidine in mRNA + S-adenosyl-L-methionine = an N(3)-methylcytidine in mRNA + S-adenosyl-L-homocysteine + H(+). Functionally, mitochondrial S-adenosyl-L-methionine-dependent methyltransferase that mediates N(3)-methylcytidine modification of residue 32 of the tRNA anticodon loop of mitochondrial tRNA(Ser)(UCN) and tRNA(Thr). N(3)-methylcytidine methylation modification regulates mitochondrial translation efficiency and is required for activity of the respiratory chain. N(3)-methylcytidine methylation of mitochondrial tRNA(Ser)(UCN) requires the formation of N(6)-dimethylallyladenosine(37) (i6A37) by TRIT1 as prerequisite. May also mediate N(3)-methylcytidine modification of mRNAs. The existence of N(3)-methylcytidine modification on mRNAs is however unclear, and additional evidences are required to confirm the role of the N(3)-methylcytidine-specific mRNA methyltransferase activity of METTL8 in vivo. In terms of biological role, overexpression in lung progenitor cells stimulates smooth muscle-specific gene expression and suppresses adipogenic gene expression. Its function is as follows. Stimulates adipogenesis. The protein is tRNA N(3)-cytidine methyltransferase METTL8, mitochondrial of Mus musculus (Mouse).